The chain runs to 1341 residues: Restriction of telomere capping protein 1 (1341 aa).

Residues 1-39 form a disordered region; the sequence is MSLSPHVENASIPKGSTPIPKNRNVSSIGKGEFLGSSSS. WD repeat units lie at residues 207–248, 256–296, 305–342, 367–406, 439–486, and 489–527; these read NKFS…SIDN, EHTR…SKSS, TASD…YKFA, AHTG…NAAE, NTGY…IPKH, and LSET…TVLE. Disordered regions lie at residues 559 to 593, 600 to 619, 630 to 651, 736 to 765, and 789 to 830; these read PELQ…IGGI, TGLT…GPTF, ASSF…ENRE, KNAT…DDDD, and NEKV…DRAR. Positions 630–644 are enriched in low complexity; that stretch reads ASSFNSSSASLTSLT. A compositionally biased stretch (acidic residues) spans 753 to 765; sequence DDGDDDDDDDDDD. Over residues 814–823 the composition is skewed to low complexity; the sequence is SSISSISASR. The stretch at 843–883 is one WD 7 repeat; it reads KIQTLVDLISIATHNASVYLSIDDLTNFKIWILIRDSLLWD. Disordered regions lie at residues 941–962 and 1013–1043; these read AFRA…KLKE and DEHE…KSIP. 2 stretches are compositionally biased toward basic and acidic residues: residues 951–962 and 1015–1027; these read DAEKKPVSKLKE and HEHQ…HDSP. 6 positions are modified to phosphoserine: Ser-1036, Ser-1080, Ser-1087, Ser-1089, Ser-1123, and Ser-1133. WD repeat units lie at residues 1129–1169 and 1216–1255; these read SRPD…KQLY and LFGI…LITN. An RING-type; degenerate zinc finger spans residues 1293 to 1335; sequence CVLCERPLKKLTMVILPCGHEGHFQCIQEWFLDENEQECPGGC.

The protein belongs to the WD repeat RTC1 family. Component of the SEA complex composed of at least IML1/SEA1, RTC1/SEA2, MTC5/SEA3, NPR2, NPR3, SEA4, SEC13 and SEH1. Interacts with ribosomes.

The protein localises to the vacuole membrane. Component of the SEA complex which coats the vacuolar membrane and is involved in intracellular trafficking, autophagy, response to nitrogen starvation, and amino acid biogenesis. May be involved in a process influencing telomere capping. In Saccharomyces cerevisiae (strain ATCC 204508 / S288c) (Baker's yeast), this protein is Restriction of telomere capping protein 1 (RTC1).